The sequence spans 660 residues: U-box domain-containing protein 13 (660 aa).

Positions 227-252 are disordered; that stretch reads DDNGEEQKVGVNSRSNGQTSTAASQK. Residues 236–250 are compositionally biased toward polar residues; sequence GVNSRSNGQTSTAAS. The region spanning 255 to 329 is the U-box domain; it reads VIPDDFRCPI…AQWCEANDIE (75 aa). ARM repeat units lie at residues 384-423, 425-464, 466-505, 507-546, and 548-587; these read ADNRVAIAEAGAIPLLVGLLSTPDSRIQEHSVTALLNLSI, ENNKGAIVSAGAIPGIVQVLKKGSMEARENAAATLFSLSV, DENKVTIGALGAIPPLVVLLNEGTQRGKKDAATALFNLCI, QGNKGKAIRAGVIPTLTRLLTEPGSGMVDEALAILAILSS, and PEGKAIIGSSDAVPSLVEFIRTGSPRNRENAAAVLVHLCS. The tract at residues 631-660 is disordered; it reads AEQQKETAVSQPEEEAEPTHPESTTEAADT. The segment covering 651-660 has biased composition (polar residues); the sequence is PESTTEAADT.

Binds to SD11, SD16, SD17, SD18, SD113, SD129 and SD25. In terms of processing, phosphorylated by SD1-6 and SD1-7.

It is found in the nucleus. The protein resides in the cytoplasm. The catalysed reaction is S-ubiquitinyl-[E2 ubiquitin-conjugating enzyme]-L-cysteine + [acceptor protein]-L-lysine = [E2 ubiquitin-conjugating enzyme]-L-cysteine + N(6)-ubiquitinyl-[acceptor protein]-L-lysine.. It functions in the pathway protein modification; protein ubiquitination. Its function is as follows. Functions as an E3 ubiquitin ligase. The polypeptide is U-box domain-containing protein 13 (PUB13) (Arabidopsis thaliana (Mouse-ear cress)).